Reading from the N-terminus, the 369-residue chain is Cobalt-precorrin-5B C(1)-methyltransferase (369 aa).

This sequence belongs to the CbiD family.

It carries out the reaction Co-precorrin-5B + S-adenosyl-L-methionine = Co-precorrin-6A + S-adenosyl-L-homocysteine. The protein operates within cofactor biosynthesis; adenosylcobalamin biosynthesis; cob(II)yrinate a,c-diamide from sirohydrochlorin (anaerobic route): step 6/10. In terms of biological role, catalyzes the methylation of C-1 in cobalt-precorrin-5B to form cobalt-precorrin-6A. The chain is Cobalt-precorrin-5B C(1)-methyltransferase from Geobacter metallireducens (strain ATCC 53774 / DSM 7210 / GS-15).